The following is a 189-amino-acid chain: Large ribosomal subunit protein bL9 (189 aa).

This sequence belongs to the bacterial ribosomal protein bL9 family.

In terms of biological role, binds to the 23S rRNA. This is Large ribosomal subunit protein bL9 from Cereibacter sphaeroides (strain KD131 / KCTC 12085) (Rhodobacter sphaeroides).